The following is a 3912-amino-acid chain: Ubiquitin carboxyl-terminal hydrolase puf (3912 aa).

Disordered stretches follow at residues 101 to 172 (AQQQ…HKSH), 518 to 590 (NVTA…ISPE), 660 to 688 (DVPS…ECSD), 851 to 878 (VVSG…VQPS), and 1491 to 1611 (SRRG…PALS). The span at 106–133 (EQQRDEASAQAEAKESSAPAEEPKKEEP) shows a compositional bias: basic and acidic residues. Low complexity predominate over residues 134-143 (SGSAGEEAQG). A compositionally biased stretch (pro residues) spans 150–164 (KKPPVGPCTPPPPQT). Over residues 522 to 532 (SSSDSGSIEGS) the composition is skewed to low complexity. Over residues 576-585 (ICDPTTEKGK) the composition is skewed to basic and acidic residues. Over residues 660–687 (DVPSSDEADGEADGDGEGELLADSDECS) the composition is skewed to acidic residues. Polar residues predominate over residues 862–876 (KASQGSSTSGSTPVQ). Over residues 1511–1520 (VKKSSMGRRR) the composition is skewed to basic residues. Residues 1550 to 1567 (TPSTGLQDVETEASSSSG) show a composition bias toward polar residues. The segment covering 1583-1594 (KGETFEQEKERP) has biased composition (basic and acidic residues). Pro residues predominate over residues 1600-1609 (PPSPTPPPPA). Residues 2015–2380 (VGLTNLGATC…SAYMLFYERR (366 aa)) enclose the USP domain. Cys-2024 acts as the Nucleophile in catalysis. Basic and acidic residues predominate over residues 2249-2263 (YKEERERRQKEKEGA). The interval 2249 to 2274 (YKEERERRQKEKEGADGSGDGNDNEK) is disordered. Catalysis depends on His-2305, which acts as the Proton acceptor. Disordered stretches follow at residues 2391–2529 (ELLV…TSKA), 3322–3344 (QQSQ…LQQQ), 3657–3776 (SERF…EERE), and 3800–3912 (ASVP…PTQI). Basic and acidic residues-rich tracts occupy residues 2402–2413 (VEEKSEAEEPTK) and 2433–2488 (EKDK…EKPT). Positions 2504 to 2523 (NCDNHQQNNNSNSKASNDQQ) are enriched in low complexity. Residues 3657 to 3703 (SERFRKESERDPFPNKKQKRDSQKIKEKEHPQPESEKETSTENDKPS) show a composition bias toward basic and acidic residues. Over residues 3706–3721 (SMESSGNAEQATDSTK) the composition is skewed to polar residues. Residues 3741–3751 (SDDETELEDEL) show a composition bias toward acidic residues. The span at 3766–3776 (TAQDRVNEERE) shows a compositional bias: basic and acidic residues. The segment covering 3865-3877 (PKTSQTNGSQQNE) has biased composition (polar residues). Residues 3878 to 3912 (SPPAATSADTAPANPSPAPAAAVASTSQAASPTQI) show a composition bias toward low complexity.

The protein belongs to the peptidase C19 family. In terms of assembly, interacts with Myc and ago.

It localises to the nucleus. The enzyme catalyses Thiol-dependent hydrolysis of ester, thioester, amide, peptide and isopeptide bonds formed by the C-terminal Gly of ubiquitin (a 76-residue protein attached to proteins as an intracellular targeting signal).. Functionally, ubiquitin hydrolase that can remove conjugated ubiquitin from target proteins and polyubiquitin chains. Essential for Myc-mediated cell growth and proliferation in developing eyes and wings. In the wing and eye, the deubiquitinating activity acts as an antagonist to the SCF E3 ubiquitin-protein ligase member archipelago (ago) to regulate Myc and CycE stability and thus control cell growth and proliferation. Also appears to regulate ago by modulating its induction by Myc. May also promote cell apoptosis in the wing imaginal disk, acting in an apoptotic pathway that appears to be largely independent of Myc. Required for preventing the activation of the immune deficiency (Imd) and Toll signaling cascades under unchallenged conditions. Also appears to be involved in modulating the differential expression of certain antimicrobial peptides (AMP) in response to infection by either Gram-positive or Gram-negative bacteria. Involved in the regulation of DNA damage repair pathways, including euchromatic site-specific double strand break (DSB) repair. The chain is Ubiquitin carboxyl-terminal hydrolase puf from Drosophila melanogaster (Fruit fly).